A 200-amino-acid chain; its full sequence is Cytochrome c biogenesis ATP-binding export protein CcmA (200 aa).

One can recognise an ABC transporter domain in the interval 1-200 (MRLSGNGLRC…ARELRIGGAA (200 aa)). 35–42 (GPNGAGKT) is a binding site for ATP.

This sequence belongs to the ABC transporter superfamily. CcmA exporter (TC 3.A.1.107) family. As to quaternary structure, the complex is composed of two ATP-binding proteins (CcmA) and two transmembrane proteins (CcmB).

It is found in the cell inner membrane. The catalysed reaction is heme b(in) + ATP + H2O = heme b(out) + ADP + phosphate + H(+). Part of the ABC transporter complex CcmAB involved in the biogenesis of c-type cytochromes; once thought to export heme, this seems not to be the case, but its exact role is uncertain. Responsible for energy coupling to the transport system. This is Cytochrome c biogenesis ATP-binding export protein CcmA from Nitrobacter winogradskyi (strain ATCC 25391 / DSM 10237 / CIP 104748 / NCIMB 11846 / Nb-255).